The following is a 250-amino-acid chain: DNA repair protein RecO (250 aa).

Belongs to the RecO family.

Functionally, involved in DNA repair and RecF pathway recombination. The sequence is that of DNA repair protein RecO from Staphylococcus aureus (strain MW2).